Here is a 96-residue protein sequence, read N- to C-terminus: Protein RnfH (96 aa).

The protein belongs to the UPF0125 (RnfH) family.

The sequence is that of Protein RnfH from Escherichia coli O127:H6 (strain E2348/69 / EPEC).